We begin with the raw amino-acid sequence, 366 residues long: tRNA/tmRNA (uracil-C(5))-methyltransferase (366 aa).

Residues glutamine 190, tyrosine 218, asparagine 223, glutamate 239, and aspartate 299 each coordinate S-adenosyl-L-methionine. Cysteine 324 (nucleophile) is an active-site residue. The active-site Proton acceptor is glutamate 358.

The protein belongs to the class I-like SAM-binding methyltransferase superfamily. RNA M5U methyltransferase family. TrmA subfamily.

The catalysed reaction is uridine(54) in tRNA + S-adenosyl-L-methionine = 5-methyluridine(54) in tRNA + S-adenosyl-L-homocysteine + H(+). It carries out the reaction uridine(341) in tmRNA + S-adenosyl-L-methionine = 5-methyluridine(341) in tmRNA + S-adenosyl-L-homocysteine + H(+). Functionally, dual-specificity methyltransferase that catalyzes the formation of 5-methyluridine at position 54 (m5U54) in all tRNAs, and that of position 341 (m5U341) in tmRNA (transfer-mRNA). The protein is tRNA/tmRNA (uracil-C(5))-methyltransferase of Escherichia coli (strain UTI89 / UPEC).